The following is a 189-amino-acid chain: 5-hmdU DNA kinase (189 aa).

Belongs to the thymidylate kinase family. 5-hmdU DNA kinase subfamily.

The enzyme catalyses 5-hydroxymethyl-dUMP in DNA + ATP = 5-phosphomethyl-dUMP in DNA + ADP + H(+). In terms of biological role, phosphorylates 5-hydroxymethyluracil (5hmdU) into 5-phosphomethyl-2'-deoxyuridine (5- PmdU) on DNA as a step in the pathway leading to thymidine hypermodifications in the viral genome. The phosphate is added internally to the DNA polymer. As a final result of the pathway of hypermodification, 5-AcNmdU substitutes for a subset of thymidines in the viral DNA. These modifications probably prevent degradation of viral genome by the host restriction-modification antiviral defense system. The protein is 5-hmdU DNA kinase of Pseudomonas phage PaMx11.